We begin with the raw amino-acid sequence, 157 residues long: Dihydrofolate reductase type 15 (157 aa).

The region spanning 2-156 (KLSLMAAISK…INYSYQIWQK (155 aa)) is the DHFR domain.

It belongs to the dihydrofolate reductase family. As to quaternary structure, homodimer.

It carries out the reaction (6S)-5,6,7,8-tetrahydrofolate + NADP(+) = 7,8-dihydrofolate + NADPH + H(+). It participates in cofactor biosynthesis; tetrahydrofolate biosynthesis; 5,6,7,8-tetrahydrofolate from 7,8-dihydrofolate: step 1/1. Key enzyme in folate metabolism. Catalyzes an essential reaction for de novo glycine and purine synthesis, and for DNA precursor synthesis. The chain is Dihydrofolate reductase type 15 (dhfrXV) from Escherichia coli.